A 357-amino-acid polypeptide reads, in one-letter code: Isopentenyl-diphosphate delta-isomerase (357 aa).

Residue 13–14 (RK) coordinates substrate. FMN is bound by residues Ser71, 72–74 (SMT), Ser102, and Asn131. A substrate-binding site is contributed by 102–104 (SMR). Gln166 provides a ligand contact to substrate. Glu167 contacts Mg(2+). FMN is bound by residues Lys198 and 311 to 312 (AR).

It belongs to the IPP isomerase type 2 family. Homooctamer. Dimer of tetramers. FMN is required as a cofactor. It depends on NADPH as a cofactor. Requires Mg(2+) as cofactor.

It localises to the cytoplasm. It carries out the reaction isopentenyl diphosphate = dimethylallyl diphosphate. In terms of biological role, involved in the biosynthesis of isoprenoids. Catalyzes the 1,3-allylic rearrangement of the homoallylic substrate isopentenyl (IPP) to its allylic isomer, dimethylallyl diphosphate (DMAPP). This is Isopentenyl-diphosphate delta-isomerase from Chlorobium chlorochromatii (strain CaD3).